The primary structure comprises 1513 residues: Mucin-2 (1513 aa).

The N-terminal stretch at M1–G20 is a signal peptide. Positions H32 to E204 constitute a VWFD 1 domain. Intrachain disulfides connect C34-C166, C56-C203, C64-C163, C215-C252, C222-C247, C234-C272, C254-C260, C262-C288, C292-C326, C309-C348, C328-C342, C350-C372, C367-C384, C370-C379, C388-C525, C410-C560, C432-C440, C571-C616, C585-C611, C598-C636, C618-C624, C626-C651, C658-C695, C671-C685, C675-C715, C697-C709, C717-C739, and C737-C746. Ca(2+) is bound at residue D46. M143 and M151 together coordinate Cu(+). E153 is a binding site for Cu(2+). N160 carries an N-linked (GlcNAc...) asparagine glycan. The Ca(2+) site is built by D168, N170, and E177. H274 and H321 together coordinate Cu(2+). The TIL domain occupies C292 to C348. Residue M323 coordinates Cu(+). A VWFC domain is found at C350–C410. The VWFD 2 domain maps to E386 to H561. D400 serves as a coordination point for Ca(2+). N-linked (GlcNAc...) asparagine glycosylation occurs at N420. Residues N527, N529, L531, D534, and D535 each contribute to the Ca(2+) site. N667 is a glycosylation site (N-linked (GlcNAc...) asparagine). A glycan (N-linked (GlcNAc...) asparagine) is linked at N767. 21 cysteine pairs are disulfide-bonded: C781-C817, C799-C811, C819-C842, C836-C854, C840-C849, C858-C989, C880-C1024, C889-C986, C906-C913, C1034-C1077, C1048-C1072, C1059-C1099, C1079-C1087, C1089-C1114, C1105-C1134, C1118-C1160, C1142-C1184, C1164-C1178, C1186-C1210, C1205-C1235, and C1208-C1218. A glycan (N-linked (GlcNAc...) asparagine) is linked at N837. The VWFD 3 domain occupies S856–P1025. D870 contacts Ca(2+). N892 carries N-linked (GlcNAc...) asparagine glycosylation. The Ca(2+) site is built by N991, D993, N998, and D999. N-linked (GlcNAc...) asparagine glycosylation is found at N1136 and N1151. Residues N1212, N1227, and N1243 are each glycosylated (N-linked (GlcNAc...) asparagine). Residues T1264, T1267, T1268, and T1280 are each glycosylated (O-linked (GalNAc) threonine). S1286 carries O-linked (GalNAc) serine glycosylation. T1290 is a glycosylation site (O-linked (GalNAc) threonine). Ca(2+) is bound by residues N1303, H1306, S1309, G1313, D1314, and E1316. N1350 carries an N-linked (GlcNAc...) asparagine glycan. Ca(2+)-binding residues include D1373 and Y1374. Repeat copies occupy residues S1392–S1407, S1408–T1423, S1424–V1434, S1435–T1445, S1446–T1456, S1457–P1467, S1468–P1478, S1479–P1489, S1490–T1500, S1501–T1511, and S1512–P1513. The interval S1392–P1513 is approximate repeats. The tract at residues S1392 to P1513 is disordered.

Homomultimer; disulfide-linked. The N- and C-terminus mediate their assembly into higher order structures to form filaments. The CTCK domains of two polypeptides associate in the endoplasmic reticulum to generate intermolecularly disulfide-bonded dimers. These dimers progress to the Golgi apparatus, which is a more acidic environment than the endoplasmic reticulum. Under acidic conditions, the N-termini form non-covalent intermolecular interactions that juxtapose assemblies of the third VWD domain (VWD3) from different CTCK-linked dimers. The VWD3 assemblies then become disulfide bonded to one another to produce long, disulfide-linked polymers that remain highly compact until secretion. Interacts with FCGBP. Interacts with AGR2; disulfide-linked. In terms of processing, O-glycosylated. O-glycosylation is required for mucin assembly. Goblet cells synthesize two forms of mucin that differ in branched chain O-glycosylation and the site of production in the colon. Post-translationally, may undergo proteolytic cleavage in the outer mucus layer of the colon, contributing to the expanded volume and loose nature of this layer which allows for bacterial colonization in contrast to the inner mucus layer which is dense and devoid of bacteria. At low pH of 6 and under, undergoes autocatalytic cleavage in vitro in the N-terminal region of the fourth VWD domain. It is likely that this also occurs in vivo and is triggered by the low pH of the late secretory pathway. Expressed in intestine and airway.

It is found in the secreted. In terms of biological role, coats the epithelia of the intestines and other mucus membrane-containing organs to provide a protective, lubricating barrier against particles and infectious agents at mucosal surfaces. Major constituent of the colon mucus, which is mainly formed by large polymeric networks of MUC2 secreted by goblet cells that cover the exposed surfaces of intestine. MUC2 networks form hydrogels that guard the underlying epithelium from pathogens and other hazardous matter entering from the outside world, while permitting nutrient absorption and gas exchange. Acts as a divalent copper chaperone that protects intestinal cells from copper toxicity and facilitates nutritional copper unptake into cells. Binds both Cu(2+) and its reduced form, Cu(1+), at two juxtaposed binding sites: Cu(2+), once reduced to Cu(1+) by vitamin C (ascorbate) or other dietary antioxidants, transits to the other binding site. MUC2-bound Cu(1+) is protected from oxidation in aerobic environments, and can be released for nutritional delivery to cells. Mucin gels store antimicrobial molecules that participate in innate immunity. Mucin glycoproteins also house and feed the microbiome, lubricate tissue surfaces, and may facilitate the removal of contaminants and waste products from the body. Goblet cells synthesize two forms of MUC2 mucin that differ in branched chain O-glycosylation and the site of production in the colon: a (1) 'thick' mucus that wraps the microbiota to form fecal pellets is produced in the proximal, ascending colon. 'Thick' mucus transits along the descending colon and is lubricated by a (2) 'thin' MUC2 mucus produced in the distal colon which adheres to the 'thick' mucus. In Rattus norvegicus (Rat), this protein is Mucin-2.